Reading from the N-terminus, the 376-residue chain is Queuine tRNA-ribosyltransferase (376 aa).

Catalysis depends on aspartate 90, which acts as the Proton acceptor. Residues 90-94 (DSGGF), aspartate 144, glutamine 193, and glycine 220 each bind substrate. The RNA binding stretch occupies residues 251–257 (GVGTPED). The active-site Nucleophile is the aspartate 270. The segment at 275–279 (TRNAR) is RNA binding; important for wobble base 34 recognition. The Zn(2+) site is built by cysteine 308, cysteine 310, cysteine 313, and histidine 339.

This sequence belongs to the queuine tRNA-ribosyltransferase family. Homodimer. Within each dimer, one monomer is responsible for RNA recognition and catalysis, while the other monomer binds to the replacement base PreQ1. The cofactor is Zn(2+).

It catalyses the reaction 7-aminomethyl-7-carbaguanine + guanosine(34) in tRNA = 7-aminomethyl-7-carbaguanosine(34) in tRNA + guanine. It functions in the pathway tRNA modification; tRNA-queuosine biosynthesis. Functionally, catalyzes the base-exchange of a guanine (G) residue with the queuine precursor 7-aminomethyl-7-deazaguanine (PreQ1) at position 34 (anticodon wobble position) in tRNAs with GU(N) anticodons (tRNA-Asp, -Asn, -His and -Tyr). Catalysis occurs through a double-displacement mechanism. The nucleophile active site attacks the C1' of nucleotide 34 to detach the guanine base from the RNA, forming a covalent enzyme-RNA intermediate. The proton acceptor active site deprotonates the incoming PreQ1, allowing a nucleophilic attack on the C1' of the ribose to form the product. After dissociation, two additional enzymatic reactions on the tRNA convert PreQ1 to queuine (Q), resulting in the hypermodified nucleoside queuosine (7-(((4,5-cis-dihydroxy-2-cyclopenten-1-yl)amino)methyl)-7-deazaguanosine). The polypeptide is Queuine tRNA-ribosyltransferase (Cupriavidus metallidurans (strain ATCC 43123 / DSM 2839 / NBRC 102507 / CH34) (Ralstonia metallidurans)).